The sequence spans 395 residues: Trans-2-enoyl-CoA reductase [NADH] (395 aa).

Residues 47-52 (GASTGY), 73-74 (FE), 110-111 (DA), and 138-139 (LA) contribute to the NAD(+) site. Position 224 (Tyr224) interacts with substrate. Residue Tyr234 is the Proton donor of the active site. NAD(+)-binding positions include Lys243 and 272–274 (VVT).

Belongs to the TER reductase family. As to quaternary structure, monomer.

It carries out the reaction a 2,3-saturated acyl-CoA + NAD(+) = a (2E)-enoyl-CoA + NADH + H(+). It functions in the pathway lipid metabolism; fatty acid biosynthesis. Functionally, involved in the fatty acid synthesis (FAS II). Catalyzes the reduction of a carbon-carbon double bond in an enoyl moiety that is covalently linked to a coenzyme A (CoA). The chain is Trans-2-enoyl-CoA reductase [NADH] from Ruminiclostridium cellulolyticum (strain ATCC 35319 / DSM 5812 / JCM 6584 / H10) (Clostridium cellulolyticum).